We begin with the raw amino-acid sequence, 1220 residues long: Plasma membrane calcium-transporting ATPase 1 (1220 aa).

Position 2 is an N-acetylglycine (Gly2). The Cytoplasmic segment spans residues 2 to 105; it reads GDMANNSVAY…KTFLQLVWEA (104 aa). 2 positions are modified to phosphoserine: Ser8 and Ser17. The helical transmembrane segment at 106 to 126 threads the bilayer; that stretch reads LQDVTLIILEIAAIVSLGLSF. Topologically, residues 127 to 154 are extracellular; that stretch reads YQPPEGDNALCGEVSVGEEEGEGETGWI. The helical transmembrane segment at 155–175 threads the bilayer; the sequence is EGAAILLSVVCVVLVTAFNDW. The Cytoplasmic segment spans residues 176-366; it reads SKEKQFRGLQ…KEKSVLQGKL (191 aa). The tract at residues 297–356 is disordered; it reads EEEKKDEKKKEKKNKKQDGAIENRNKAKAQDGAAMEMQPLKSEEGGDGDEKDKKKANLPK. Basic and acidic residues-rich tracts occupy residues 312–325 and 337–356; these read KQDG…KAKA and KSEE…NLPK. Ser338 carries the phosphoserine modification. A helical membrane pass occupies residues 367-386; sequence TKLAVQIGKAGLLMSAITVI. At 387–418 the chain is on the extracellular side; sequence ILVLYFVIDTFWVQKRPWLAECTPIYIQYFVK. Residues 419–439 traverse the membrane as a helical segment; sequence FFIIGVTVLVVAVPEGLPLAV. Residues 440-855 are Cytoplasmic-facing; it reads TISLAYSVKK…RNVYDSISKF (416 aa). The 4-aspartylphosphate intermediate role is filled by Asp475. 3 residues coordinate Mg(2+): Asp475, Thr477, and Asp797. A helical transmembrane segment spans residues 856–876; it reads LQFQLTVNVVAVIVAFTGACI. Residues 877-882 lie on the Extracellular side of the membrane; that stretch reads TQDSPL. A helical transmembrane segment spans residues 883-903; sequence KAVQMLWVNLIMDTLASLALA. The Cytoplasmic portion of the chain corresponds to 904–927; sequence TEPPTESLLLRKPYGRNKPLISRT. A helical membrane pass occupies residues 928-948; sequence MMKNILGHAFYQLVVVFTLLF. Over 949–971 the chain is Extracellular; it reads AGEKFFDIDSGRNAPLHAPPSEH. A helical membrane pass occupies residues 972 to 991; sequence YTIVFNTFVLMQLFNEINAR. The Cytoplasmic portion of the chain corresponds to 992 to 1005; sequence KIHGERNVFEGIFN. A helical membrane pass occupies residues 1006–1027; the sequence is NAIFCTIVLGTFVVQIIIVQFG. At 1028–1039 the chain is on the extracellular side; that stretch reads GKPFSCSELSIE. The helical transmembrane segment at 1040–1060 threads the bilayer; the sequence is QWLWSIFLGMGTLLWGQLIST. The Cytoplasmic segment spans residues 1061-1220; it reads IPTSRLKFLK…SPLHSLETSL (160 aa). The calmodulin-binding subdomain A stretch occupies residues 1100–1117; it reads LRRGQILWFRGLNRIQTQ. Thr1116 is subject to Phosphothreonine; by PKC. Residues 1118–1220 are required for basolateral membrane targeting; that stretch reads IRVVNAFRSS…SPLHSLETSL (103 aa). Residues Ser1140 and Ser1155 each carry the phosphoserine modification. The tract at residues 1160–1220 is disordered; that stretch reads PLIDDTDAED…SPLHSLETSL (61 aa). A Phosphothreonine modification is found at Thr1165. Ser1178 is subject to Phosphoserine; by PKA. Ser1182 is modified (phosphoserine). The segment covering 1200-1220 has biased composition (polar residues); that stretch reads MNKSATSSSPGSPLHSLETSL.

It belongs to the cation transport ATPase (P-type) (TC 3.A.3) family. Type IIB subfamily. In terms of assembly, monomer. Dimer. Oligomer. Calmodulin binding. Interacts with PDZD11. Interacts with SLC35G1 and STIM1; inhibits calcium-transporting ATPase activity after store depletion. Interacts with YWHAE; interacts with the monomeric and dimeric forms of the YWHAE but prefer the monomer form; this interaction inhibits calcium-transporting ATPase activity. Interacts with NPTN; this interaction stabilizes ATP2B1 and increases ATPase activity; this interaction controls T cell calcium homeostasis following T cell activation. Interacts with EPB41; regulates small intestinal calcium absorption through regulation of membrane expression of ATP2B1. In terms of tissue distribution, isoform B: Ubiquitously expressed. Isoform C: Found in brain cortex, skeletal muscle and heart muscle. Isoform D: Has only been found in fetal skeletal muscle. Isoform K: Found in small intestine and liver. Abundantly expressed in the endometrial epithelial cells and glandular epithelial cells in early-proliferative phase and early-secretory phases.

It localises to the cell membrane. Its subcellular location is the basolateral cell membrane. The protein localises to the synapse. It is found in the presynaptic cell membrane. The protein resides in the cytoplasmic vesicle. It localises to the secretory vesicle. Its subcellular location is the synaptic vesicle membrane. The catalysed reaction is Ca(2+)(in) + ATP + H2O = Ca(2+)(out) + ADP + phosphate + H(+). Its function is as follows. Catalyzes the hydrolysis of ATP coupled with the transport of calcium from the cytoplasm to the extracellular space thereby maintaining intracellular calcium homeostasis. Plays a role in blood pressure regulation through regulation of intracellular calcium concentration and nitric oxide production leading to regulation of vascular smooth muscle cells vasoconstriction. Positively regulates bone mineralization through absorption of calcium from the intestine. Plays dual roles in osteoclast differentiation and survival by regulating RANKL-induced calcium oscillations in preosteoclasts and mediating calcium extrusion in mature osteoclasts. Regulates insulin sensitivity through calcium/calmodulin signaling pathway by regulating AKT1 activation and NOS3 activation in endothelial cells. May play a role in synaptic transmission by modulating calcium and proton dynamics at the synaptic vesicles. In Homo sapiens (Human), this protein is Plasma membrane calcium-transporting ATPase 1.